The primary structure comprises 50 residues: Mast cell degranulating peptide (50 aa).

The first 27 residues, 1 to 27 (MISMLRCTFFFVSVILITSYFVTPTMS), serve as a signal peptide directing secretion. The residue at position 29 (lysine 29) is an N6-formyllysine. A disulfide bond links cysteine 30 and cysteine 42. Lysine 44 and lysine 48 each carry N6-formyllysine. The residue at position 49 (asparagine 49) is an Asparagine amide.

As to expression, expressed by the venom gland.

It is found in the secreted. Its function is as follows. Potent anti-inflammatory agent. At low concentrations, mediates the degranulation of mast cells thus evoking an inflammatory response. Also acts as a neurotoxin capable of blocking a class of voltage-gated potassium channels. The sequence is that of Mast cell degranulating peptide from Apis cerana cerana (Oriental honeybee).